We begin with the raw amino-acid sequence, 495 residues long: Putative aldehyde dehydrogenase AldA (495 aa).

212–218 is an NAD(+) binding site; the sequence is GKGSESG. Residues Glu256 and Cys290 contribute to the active site.

This sequence belongs to the aldehyde dehydrogenase family.

It catalyses the reaction an aldehyde + NAD(+) + H2O = a carboxylate + NADH + 2 H(+). This Staphylococcus aureus (strain USA300) protein is Putative aldehyde dehydrogenase AldA (aldA).